Consider the following 325-residue polypeptide: MTEQSIKKVSVVIPVYNEQQSLPELMRRTDAACAQLALDYEILLVDDGSSDDSAAMLVAAAEAPDSHIVAVLLNRNYGQHSAIMAGFSHVSGDLVITLDADLQNPPEEIPRLVETAQQGYDVVGTVRQNRQDSGFRKIASRAINHLIQRATGKAMGDYGCMLRAYRRHIVDAMLNCHERSTFIPILANTFARQATEIPVLHAEREFGDSKYSLMSLINLMYDLITCLTTTPLRLLSVIGSVIALMGFAFSLLLIALRLFLGAEWAGDGVFMLFAVLFIFIGAQFVGMGLLGEYIGRIYNDVRARPRYFIQRVVSRDADSTKDKKS.

Transmembrane regions (helical) follow at residues 234 to 254 (LLSVIGSVIALMGFAFSLLLI) and 269 to 289 (VFMLFAVLFIFIGAQFVGMGL).

It belongs to the glycosyltransferase 2 family.

Its subcellular location is the cell inner membrane. It catalyses the reaction UDP-4-deoxy-4-formamido-beta-L-arabinose + di-trans,octa-cis-undecaprenyl phosphate = 4-deoxy-4-formamido-alpha-L-arabinopyranosyl di-trans,octa-cis-undecaprenyl phosphate + UDP. The protein operates within glycolipid biosynthesis; 4-amino-4-deoxy-alpha-L-arabinose undecaprenyl phosphate biosynthesis; 4-amino-4-deoxy-alpha-L-arabinose undecaprenyl phosphate from UDP-4-deoxy-4-formamido-beta-L-arabinose and undecaprenyl phosphate: step 1/2. It functions in the pathway bacterial outer membrane biogenesis; lipopolysaccharide biosynthesis. Its function is as follows. Catalyzes the transfer of 4-deoxy-4-formamido-L-arabinose from UDP to undecaprenyl phosphate. The modified arabinose is attached to lipid A and is required for resistance to polymyxin and cationic antimicrobial peptides. This chain is Undecaprenyl-phosphate 4-deoxy-4-formamido-L-arabinose transferase, found in Erwinia tasmaniensis (strain DSM 17950 / CFBP 7177 / CIP 109463 / NCPPB 4357 / Et1/99).